A 132-amino-acid chain; its full sequence is Transmembrane protein 170B (132 aa).

The Extracellular portion of the chain corresponds to 1 to 37; the sequence is MKAEGGDHSMINLSVQQVLSLWAHGTVLRNLTEMWYW. Asparagine 12 carries an N-linked (GlcNAc...) asparagine glycan. Residues 38 to 58 form a helical membrane-spanning segment; that stretch reads IFLWALFSSLFVHGAAGVLMF. Residues 59–68 are Cytoplasmic-facing; sequence VMLQRHRQGR. Residues 69-89 form a helical membrane-spanning segment; it reads VISVIAVSIGFLASVTGAMIT. Residues 90–104 lie on the Extracellular side of the membrane; the sequence is SAAVAGIYRVAGKNM. A helical transmembrane segment spans residues 105–125; that stretch reads APLEALVWGVGQTVLTLIISF. Residues 126-132 are Cytoplasmic-facing; sequence SRILATL.

Belongs to the TMEM170 family. In terms of assembly, interacts with CTNNB1. Expressed in normal breast tissues. Down-regulated in breast cancer cells (at protein level).

The protein localises to the cell membrane. Its function is as follows. Negatively regulates the canonical Wnt signaling in breast cancer cells. Exerts an inhibitory effect on breast cancer growth by inhibiting CTNNB1 stabilization and nucleus translocation, which reduces the activity of Wnt targets. In Homo sapiens (Human), this protein is Transmembrane protein 170B (TMEM170B).